A 174-amino-acid chain; its full sequence is C-type lectin domain family 2 member A (174 aa).

At 1-27 the chain is on the cytoplasmic side; that stretch reads MINPELRDGRADGFIHRIVPKLIQNWK. The chain crosses the membrane as a helical; Signal-anchor for type II membrane protein span at residues 28–48; that stretch reads IGLMCFLSIIITTVCIIMIAT. The Extracellular segment spans residues 49 to 174; that stretch reads WSKHAKPVAC…WICSKPKYFL (126 aa). C58 and C69 are oxidised to a cystine. Residues 65 to 174 form the C-type lectin domain; sequence VRDKCFYFSD…WICSKPKYFL (110 aa). Residues N78, N130, and N143 are each glycosylated (N-linked (GlcNAc...) asparagine). Cysteines 86 and 167 form a disulfide.

Homodimer; non-disulfide-linked. Interacts with KLRB1. Interacts with KLRF2. N-glycosylated. In terms of tissue distribution, mainly expressed in skin. Also expressed in keratinocytes, spleen, thymus, small intestine, peripheral blood monocytes, bone marrow, ovary, testis and skin. High expression in CD8(+), B-lymphocytes and naive CD4(+) T-cells. Restricted mostly to proliferating lymphocytes. Not detected in myeloid leukocytes or natural killer (NK) cells.

It localises to the cell membrane. Membrane-bound protein expressed mainly on keratinocytes which acts as a ligand to stimulate the activating receptor NKp65/KLRF2, expressed on the surface of natural killer (NK) cells. Facilitates thereby dedicated immune recognition of keratinocytes leading to natural killer cell mediated cytotoxicity. Also plays a role in modulating the extent of T-cell expansion. In Homo sapiens (Human), this protein is C-type lectin domain family 2 member A (CLEC2A).